The sequence spans 902 residues: Cytosolic 10-formyltetrahydrofolate dehydrogenase (902 aa).

The interval 1-310 (MKIAVIGQSL…LASNFFKGAA (310 aa)) is hydrolase domain. Position 9 is a phosphoserine (Ser-9). Lys-38 is modified (N6-succinyllysine). (6R)-10-formyltetrahydrofolate is bound at residue 88–90 (QFI). His-106 (proton donor) is an active-site residue. A (6R)-10-formyltetrahydrofolate-binding site is contributed by Asp-142. The Carrier domain maps to 318 to 395 (EAELVTAEAV…DFIQLLVRKL (78 aa)). An O-(pantetheine 4'-phosphoryl)serine modification is found at Ser-354. The segment at 417-902 (TVRMPHQLFI…LRVKTVTFEY (486 aa)) is aldehyde dehydrogenase domain. NADP(+)-binding positions include 571-573 (IPW) and 597-600 (KPAQ). 2 positions are modified to phosphoserine: Ser-629 and Ser-631. NADP(+)-binding positions include 630-635 (GSLVGQ) and 650-651 (GS). Lys-660 is subject to N6-succinyllysine. Glu-673 (proton acceptor) is an active-site residue. 673 to 674 (EL) contacts NADP(+). The active-site Proton donor is the Cys-707. Residue Lys-757 coordinates NADP(+). Lys-767 is subject to N6-succinyllysine. An NADP(+)-binding site is contributed by 804–806 (ESF). Ser-825 carries the post-translational modification Phosphoserine. Lys-882 is subject to N6-acetyllysine.

In the N-terminal section; belongs to the GART family. It in the C-terminal section; belongs to the aldehyde dehydrogenase family. ALDH1L subfamily. Homotetramer. Phosphopantetheinylation at Ser-354 by AASDHPPT is required for the formyltetrahydrofolate dehydrogenase activity. As to expression, highly expressed in liver, pancreas and kidney.

Its subcellular location is the cytoplasm. It is found in the cytosol. The catalysed reaction is (6R)-10-formyltetrahydrofolate + NADP(+) + H2O = (6S)-5,6,7,8-tetrahydrofolate + CO2 + NADPH + H(+). Cytosolic 10-formyltetrahydrofolate dehydrogenase that catalyzes the NADP(+)-dependent conversion of 10-formyltetrahydrofolate to tetrahydrofolate and carbon dioxide. May also have an NADP(+)-dependent aldehyde dehydrogenase activity towards formaldehyde, acetaldehyde, propionaldehyde, and benzaldehyde. The polypeptide is Cytosolic 10-formyltetrahydrofolate dehydrogenase (Homo sapiens (Human)).